A 376-amino-acid chain; its full sequence is Glutamate 5-kinase (376 aa).

Lys15 provides a ligand contact to ATP. Residues Ser55, Asp142, and Asn154 each coordinate substrate. ATP contacts are provided by residues 174–175 (TD) and 216–222 (TGGMATK). One can recognise a PUA domain in the interval 281–359 (AGKVLVDAGA…AEIEQLLGYR (79 aa)).

Belongs to the glutamate 5-kinase family.

It localises to the cytoplasm. The enzyme catalyses L-glutamate + ATP = L-glutamyl 5-phosphate + ADP. It functions in the pathway amino-acid biosynthesis; L-proline biosynthesis; L-glutamate 5-semialdehyde from L-glutamate: step 1/2. Catalyzes the transfer of a phosphate group to glutamate to form L-glutamate 5-phosphate. In Trichlorobacter lovleyi (strain ATCC BAA-1151 / DSM 17278 / SZ) (Geobacter lovleyi), this protein is Glutamate 5-kinase.